Reading from the N-terminus, the 809-residue chain is Hydrazine synthase subunit alpha (809 aa).

Positions 1–27 (MGKRKLGVIASAFVAGALVCGSTLVNA) are cleaved as a signal peptide. Cysteine 303 is a Zn(2+) binding site. Cysteine 583 and cysteine 586 together coordinate heme. Histidine 587 is a binding site for Zn(2+). Residues tyrosine 591, cysteine 685, cysteine 688, histidine 689, and histidine 772 each coordinate heme. One can recognise a Cytochrome c domain in the interval 633–792 (KGVKHGEDVV…AIVEWIDLGA (160 aa)).

Part of the hydrazine synthase complex that forms an elongated dimer of heterotrimers composed of one alpha, one beta and one gamma subunit. It depends on heme c as a cofactor.

The protein localises to the anammoxosome. The enzyme catalyses hydrazine + 3 Fe(III)-[cytochrome c] + H2O = nitric oxide + 3 Fe(II)-[cytochrome c] + NH4(+) + 2 H(+). Its pathway is nitrogen metabolism. In terms of biological role, component of the hydrazine synthase complex that catalyzes the condensation of nitric oxide (NO) with ammonium to form hydrazine. The alpha subunit catalyzes the second half-reaction, i.e. the condensation of hydroxylamine formed in the active site of the gamma subunit with ammonia, yielding hydrazine. Is involved in anaerobic ammonium oxidation (anammox), a biological process in which nitrite is used as the electron acceptor in the conversion of ammonium to dinitrogen gas (N2) and water; this bacterial process has a major role in the Earth's nitrogen cycle and has been estimated to synthesize up to 50% of the dinitrogen gas emitted into our atmosphere from the oceans. The chain is Hydrazine synthase subunit alpha from Kuenenia stuttgartiensis.